A 408-amino-acid chain; its full sequence is Acetate kinase (408 aa).

Residue N7 coordinates Mg(2+). K14 contacts ATP. Residue R91 participates in substrate binding. D148 acts as the Proton donor/acceptor in catalysis. ATP-binding positions include H208–G212, D283–R285, and G331–N335. Position 384 (E384) interacts with Mg(2+).

It belongs to the acetokinase family. As to quaternary structure, homodimer. The cofactor is Mg(2+). Mn(2+) serves as cofactor.

Its subcellular location is the cytoplasm. The catalysed reaction is acetate + ATP = acetyl phosphate + ADP. It participates in metabolic intermediate biosynthesis; acetyl-CoA biosynthesis; acetyl-CoA from acetate: step 1/2. Its function is as follows. Catalyzes the formation of acetyl phosphate from acetate and ATP. Can also catalyze the reverse reaction. This chain is Acetate kinase, found in Methanosarcina barkeri (strain Fusaro / DSM 804).